We begin with the raw amino-acid sequence, 403 residues long: S-adenosylmethionine:tRNA ribosyltransferase-isomerase (403 aa).

The protein belongs to the QueA family. Monomer.

The protein localises to the cytoplasm. It catalyses the reaction 7-aminomethyl-7-carbaguanosine(34) in tRNA + S-adenosyl-L-methionine = epoxyqueuosine(34) in tRNA + adenine + L-methionine + 2 H(+). It functions in the pathway tRNA modification; tRNA-queuosine biosynthesis. Transfers and isomerizes the ribose moiety from AdoMet to the 7-aminomethyl group of 7-deazaguanine (preQ1-tRNA) to give epoxyqueuosine (oQ-tRNA). This is S-adenosylmethionine:tRNA ribosyltransferase-isomerase from Psychrobacter arcticus (strain DSM 17307 / VKM B-2377 / 273-4).